Consider the following 538-residue polypeptide: Methyl-accepting chemotaxis protein NahY (538 aa).

The Cytoplasmic portion of the chain corresponds to 1-9 (MQQFTIRTR). The helical transmembrane segment at 10-30 (LLMLVGAMFIGFITIELMGFS) threads the bilayer. Over 31 to 187 (ALQRGVASLN…AVVLYDSSRT (157 aa)) the chain is Periplasmic. The helical transmembrane segment at 188–208 (MLALLLLGILICGGVFATRLI) threads the bilayer. Positions 209-261 (RSIIHPLTTLKDAAARVALGDLSQSIQVSGRNEVTDVQQSVQAMQANLRNTLQ) constitute an HAMP domain. Residues 209 to 538 (RSIIHPLTTL…LNNLVNRFSM (330 aa)) lie on the Cytoplasmic side of the membrane. The region spanning 266–502 (SAAQLAAAAE…EVDRNLVAIS (237 aa)) is the Methyl-accepting transducer domain.

The protein belongs to the methyl-accepting chemotaxis (MCP) protein family.

It is found in the cell inner membrane. Functionally, chemotactic-signal transducers respond to changes in the concentration of attractants and repellents in the environment, transduce a signal from the outside to the inside of the cell, and facilitate sensory adaptation through the variation of the level of methylation. Chemoreceptor for naphthalene or a related compound. May facilitate biodegradation. This Pseudomonas putida (Arthrobacter siderocapsulatus) protein is Methyl-accepting chemotaxis protein NahY (nahY).